The chain runs to 114 residues: Ig heavy chain V-A2 region BS-1 (114 aa).

Pyrrolidone carboxylic acid is present on Gln-1. The region spanning 1-107 (QSVKESEGGL…YLGLMDVWGP (107 aa)) is the Ig-like domain.

This is Ig heavy chain V-A2 region BS-1 from Oryctolagus cuniculus (Rabbit).